The chain runs to 120 residues: Large ribosomal subunit protein uL14 (120 aa).

Belongs to the universal ribosomal protein uL14 family. As to quaternary structure, part of the 50S ribosomal subunit. Forms a cluster with proteins L3 and L19. In the 70S ribosome, L14 and L19 interact and together make contacts with the 16S rRNA in bridges B5 and B8.

Binds to 23S rRNA. Forms part of two intersubunit bridges in the 70S ribosome. The sequence is that of Large ribosomal subunit protein uL14 from Dictyoglomus thermophilum (strain ATCC 35947 / DSM 3960 / H-6-12).